Consider the following 433-residue polypeptide: Enolase (433 aa).

Gln-167 provides a ligand contact to (2R)-2-phosphoglycerate. Glu-209 acts as the Proton donor in catalysis. The Mg(2+) site is built by Asp-246, Glu-291, and Asp-318. Lys-343, Arg-372, Ser-373, and Lys-394 together coordinate (2R)-2-phosphoglycerate. Catalysis depends on Lys-343, which acts as the Proton acceptor.

Belongs to the enolase family. As to quaternary structure, component of the RNA degradosome, a multiprotein complex involved in RNA processing and mRNA degradation. Requires Mg(2+) as cofactor.

The protein resides in the cytoplasm. Its subcellular location is the secreted. It localises to the cell surface. It carries out the reaction (2R)-2-phosphoglycerate = phosphoenolpyruvate + H2O. It functions in the pathway carbohydrate degradation; glycolysis; pyruvate from D-glyceraldehyde 3-phosphate: step 4/5. Functionally, catalyzes the reversible conversion of 2-phosphoglycerate (2-PG) into phosphoenolpyruvate (PEP). It is essential for the degradation of carbohydrates via glycolysis. The protein is Enolase of Marinomonas sp. (strain MWYL1).